The primary structure comprises 391 residues: Alpha-2B adrenergic receptor (391 aa).

Residues 1–25 (AIAAVITFLILFTIFGNALVILAVL) form a helical membrane-spanning segment. Topologically, residues 26-36 (TSRSLRAPQNL) are cytoplasmic. A helical membrane pass occupies residues 37 to 62 (FLVSLAAADILVATLIIPFSLANELL). Residues 63–72 (GYWYFRRTWC) are Extracellular-facing. A disulfide bridge links Cys72 with Cys151. The chain crosses the membrane as a helical span at residues 73 to 95 (EVYLALDVLFCTSSIVHLCAISL). The Cytoplasmic segment spans residues 96-117 (DRYWAVSRALEYNSKRTPRRIK). Residues 118–140 (CIILTVWLIAAVISLPPLIYKGD) traverse the membrane as a helical segment. At 141 to 156 (QGPQPRGRPQCKLNQE) the chain is on the extracellular side. A helical transmembrane segment spans residues 157–180 (AWYILASSIGSFFAPCLIMILVYL). Topologically, residues 181–355 (RIYLIAKRSH…LTREKRFTFV (175 aa)) are cytoplasmic. 2 disordered regions span residues 194–218 (PRAK…APSS) and 233–312 (EANR…PLQQ). Basic and acidic residues predominate over residues 233–247 (EANRHSKSTGEKVEG). Residues 256-266 (PGVPPSWPPLP) are compositionally biased toward pro residues. Residues 271-281 (GQEEDIYRASP) are compositionally biased toward basic and acidic residues. Over residues 282–294 (EEEAGDDEEEECE) the composition is skewed to acidic residues. A compositionally biased stretch (low complexity) spans 295–309 (PQAVPVSPASACSPP). Residues 356 to 379 (LAVVIGVFVLCWFPFFFSYSLGAI) traverse the membrane as a helical segment. Over 380–388 (CPQHCKVPH) the chain is Extracellular. A helical membrane pass occupies residues 389–391 (GLF).

It belongs to the G-protein coupled receptor 1 family. Adrenergic receptor subfamily. ADRA2B sub-subfamily. As to quaternary structure, interacts with RAB26. Interacts with PPP1R9B. Interacts with GGA1, GGA2 and GGA3.

It localises to the cell membrane. Its function is as follows. Alpha-2 adrenergic receptors mediate the catecholamine-induced inhibition of adenylate cyclase through the action of G proteins. The chain is Alpha-2B adrenergic receptor (ADRA2B) from Erinaceus europaeus (Western European hedgehog).